Reading from the N-terminus, the 429-residue chain is Serine hydroxymethyltransferase (429 aa).

(6S)-5,6,7,8-tetrahydrofolate-binding positions include Leu130 and 134–136 (GHL). At Lys239 the chain carries N6-(pyridoxal phosphate)lysine.

It belongs to the SHMT family. Homodimer. Requires pyridoxal 5'-phosphate as cofactor.

The protein localises to the cytoplasm. The enzyme catalyses (6R)-5,10-methylene-5,6,7,8-tetrahydrofolate + glycine + H2O = (6S)-5,6,7,8-tetrahydrofolate + L-serine. It functions in the pathway one-carbon metabolism; tetrahydrofolate interconversion. Its pathway is amino-acid biosynthesis; glycine biosynthesis; glycine from L-serine: step 1/1. Functionally, catalyzes the reversible interconversion of serine and glycine with tetrahydrofolate (THF) serving as the one-carbon carrier. This reaction serves as the major source of one-carbon groups required for the biosynthesis of purines, thymidylate, methionine, and other important biomolecules. Also exhibits THF-independent aldolase activity toward beta-hydroxyamino acids, producing glycine and aldehydes, via a retro-aldol mechanism. This Phenylobacterium zucineum (strain HLK1) protein is Serine hydroxymethyltransferase.